Reading from the N-terminus, the 446-residue chain is Glutamine synthetase (446 aa).

The region spanning 14–106 (NNVKFIRFQF…VICDVYTTNG (93 aa)) is the GS beta-grasp domain. The GS catalytic domain maps to 113–446 (PRGCLKRVLA…DWETKQYLKI (334 aa)). The Mg(2+) site is built by Glu137 and Glu139. Glu187 provides a ligand contact to ATP. Mg(2+)-binding residues include Glu192 and Glu199. L-glutamate is bound by residues 243-244 (NG) and Gly244. His248 is a binding site for Mg(2+). Residues 250–252 (HQS) and Ser252 each bind ATP. Arg301, Glu307, and Arg319 together coordinate L-glutamate. ATP-binding residues include Arg319, Arg324, and Lys331. Glu336 contacts Mg(2+). Arg338 provides a ligand contact to L-glutamate.

Belongs to the glutamine synthetase family. Oligomer of 12 subunits arranged in the form of two hexagons. Requires Mg(2+) as cofactor.

The protein resides in the cytoplasm. The enzyme catalyses L-glutamate + NH4(+) + ATP = L-glutamine + ADP + phosphate + H(+). Its function is as follows. Probably involved in nitrogen metabolism via ammonium assimilation. Catalyzes the ATP-dependent biosynthesis of glutamine from glutamate and ammonia. The chain is Glutamine synthetase from Methanococcus maripaludis (strain DSM 14266 / JCM 13030 / NBRC 101832 / S2 / LL).